Here is a 231-residue protein sequence, read N- to C-terminus: NADH-ubiquinone oxidoreductase chain 4 (231 aa).

A run of 6 helical transmembrane segments spans residues 1 to 21 (PIAGSMVLAAILLKLGGYGII), 34 to 54 (MFLPFIVLALWGATLANLTCL), 62 to 84 (LIAYSSISHMGLVVATIIIQTPW), 89 to 111 (AMALMIAHGFTSSALFCLANTTY), 128 to 148 (ILPMATTWWLLANLMNIAIPP), and 169 to 189 (TIIMLGLSMLITASYSLHMFL).

The protein belongs to the complex I subunit 4 family.

Its subcellular location is the mitochondrion membrane. It catalyses the reaction a ubiquinone + NADH + 5 H(+)(in) = a ubiquinol + NAD(+) + 4 H(+)(out). Core subunit of the mitochondrial membrane respiratory chain NADH dehydrogenase (Complex I) that is believed to belong to the minimal assembly required for catalysis. Complex I functions in the transfer of electrons from NADH to the respiratory chain. The immediate electron acceptor for the enzyme is believed to be ubiquinone. In Bothrops erythromelas (Caatinga lance head), this protein is NADH-ubiquinone oxidoreductase chain 4 (MT-ND4).